The chain runs to 111 residues: Probable 4-amino-4-deoxy-L-arabinose-phosphoundecaprenol flippase subunit ArnE (111 aa).

Over 1–35 the chain is Cytoplasmic; the sequence is MIWLTLVFASLLSVAGQLCQKQATCFAAVNKRRKH. Residues 36 to 56 form a helical membrane-spanning segment; sequence IVLWLGLALACLGLAMVLWLL. Positions 40–109 constitute an EamA domain; the sequence is LGLALACLGL…IIGGIVILGS (70 aa). Over 57 to 60 the chain is Periplasmic; that stretch reads VLQN. Residues 61 to 81 traverse the membrane as a helical segment; the sequence is VPVGIAYPMLSLNFVWVTLAA. Topologically, residues 82–87 are cytoplasmic; sequence VKLWHE. A helical transmembrane segment spans residues 88–108; sequence PVSLRHWCGVAFIIGGIVILG. Topologically, residues 109–111 are periplasmic; it reads STV.

Belongs to the ArnE family. In terms of assembly, heterodimer of ArnE and ArnF.

It is found in the cell inner membrane. Its pathway is bacterial outer membrane biogenesis; lipopolysaccharide biosynthesis. Translocates 4-amino-4-deoxy-L-arabinose-phosphoundecaprenol (alpha-L-Ara4N-phosphoundecaprenol) from the cytoplasmic to the periplasmic side of the inner membrane. The sequence is that of Probable 4-amino-4-deoxy-L-arabinose-phosphoundecaprenol flippase subunit ArnE from Escherichia coli (strain UTI89 / UPEC).